We begin with the raw amino-acid sequence, 212 residues long: Uridine kinase (212 aa).

13–20 (GASASGKS) is a binding site for ATP.

The protein belongs to the uridine kinase family.

The protein localises to the cytoplasm. It catalyses the reaction uridine + ATP = UMP + ADP + H(+). It carries out the reaction cytidine + ATP = CMP + ADP + H(+). It participates in pyrimidine metabolism; CTP biosynthesis via salvage pathway; CTP from cytidine: step 1/3. The protein operates within pyrimidine metabolism; UMP biosynthesis via salvage pathway; UMP from uridine: step 1/1. This chain is Uridine kinase, found in Shewanella baltica (strain OS223).